The sequence spans 127 residues: Protein ApaG (127 aa).

Residues 3–127 form the ApaG domain; that stretch reads KSETYRIEVE…FMLAMPRVLH (125 aa).

This Azoarcus sp. (strain BH72) protein is Protein ApaG.